A 506-amino-acid polypeptide reads, in one-letter code: ATP synthase subunit alpha, chloroplastic (506 aa).

An ATP-binding site is contributed by 170–177 (GDRQTGKT). Thr-257 is subject to Phosphothreonine.

The protein belongs to the ATPase alpha/beta chains family. In terms of assembly, F-type ATPases have 2 components, CF(1) - the catalytic core - and CF(0) - the membrane proton channel. CF(1) has five subunits: alpha(3), beta(3), gamma(1), delta(1), epsilon(1). CF(0) has four main subunits: a, b, b' and c.

It is found in the plastid. The protein localises to the chloroplast thylakoid membrane. It carries out the reaction ATP + H2O + 4 H(+)(in) = ADP + phosphate + 5 H(+)(out). In terms of biological role, produces ATP from ADP in the presence of a proton gradient across the membrane. The alpha chain is a regulatory subunit. This Olimarabidopsis pumila (Dwarf rocket) protein is ATP synthase subunit alpha, chloroplastic.